Here is a 265-residue protein sequence, read N- to C-terminus: 3-methyl-2-oxobutanoate hydroxymethyltransferase (265 aa).

The Mg(2+) site is built by Asp-45 and Asp-84. 3-methyl-2-oxobutanoate contacts are provided by residues 45–46 (DS), Asp-84, and Lys-112. Residue Glu-114 coordinates Mg(2+). The Proton acceptor role is filled by Glu-181.

This sequence belongs to the PanB family. Homodecamer; pentamer of dimers. Mg(2+) serves as cofactor.

It localises to the cytoplasm. It carries out the reaction 3-methyl-2-oxobutanoate + (6R)-5,10-methylene-5,6,7,8-tetrahydrofolate + H2O = 2-dehydropantoate + (6S)-5,6,7,8-tetrahydrofolate. Its pathway is cofactor biosynthesis; (R)-pantothenate biosynthesis; (R)-pantoate from 3-methyl-2-oxobutanoate: step 1/2. In terms of biological role, catalyzes the reversible reaction in which hydroxymethyl group from 5,10-methylenetetrahydrofolate is transferred onto alpha-ketoisovalerate to form ketopantoate. The protein is 3-methyl-2-oxobutanoate hydroxymethyltransferase of Yersinia enterocolitica serotype O:8 / biotype 1B (strain NCTC 13174 / 8081).